The primary structure comprises 521 residues: 56 kDa type-specific antigen (521 aa).

The first 22 residues, Met1 to Ala22, serve as a signal peptide directing secretion. Residues Leu64–Val86 traverse the membrane as a helical segment. The disordered stretch occupies residues Leu386 to Lys415. Residues Cys396–Lys415 are compositionally biased toward basic and acidic residues. A helical transmembrane segment spans residues Thr469–Ala484.

The protein resides in the cell membrane. In terms of biological role, may be an adherent factor for rickettsial adsorption to the host-cell surface and a determinant of virulence of individual rickettsial strain. It is the major outer membrane protein. This Orientia tsutsugamushi (Rickettsia tsutsugamushi) protein is 56 kDa type-specific antigen.